A 216-amino-acid chain; its full sequence is MPISSLVPLTEIRQYCLQLGFSLSDQEIESLRGYLCLLTKWNKVMNLVGFTTWKTICSNLIIDSFHLAIFIRSLSLPTDPLCWDFGSGAGLPGIPLRIIWKEGSYWLVESREKRAIFLKTLLAQYPLTQTYVYCGRVEEFMLANCLSDVALIVSRAFMPWQALLKLIEKKISFKGVIVLLLNDIPKNIDSCWYIQTTYPYSIGGEKRFFVALKKAS.

S-adenosyl-L-methionine is bound by residues Gly86, Leu91, 137 to 138, and Arg155; that span reads VE.

This sequence belongs to the methyltransferase superfamily. RNA methyltransferase RsmG family.

Its subcellular location is the cytoplasm. It carries out the reaction guanosine(527) in 16S rRNA + S-adenosyl-L-methionine = N(7)-methylguanosine(527) in 16S rRNA + S-adenosyl-L-homocysteine. In terms of biological role, specifically methylates the N7 position of guanine in position 527 of 16S rRNA. The protein is Ribosomal RNA small subunit methyltransferase G of Lawsonia intracellularis (strain PHE/MN1-00).